The sequence spans 175 residues: Peptide methionine sulfoxide reductase MsrA (175 aa).

Residue Cys10 is part of the active site.

The protein belongs to the MsrA Met sulfoxide reductase family.

It catalyses the reaction L-methionyl-[protein] + [thioredoxin]-disulfide + H2O = L-methionyl-(S)-S-oxide-[protein] + [thioredoxin]-dithiol. The catalysed reaction is [thioredoxin]-disulfide + L-methionine + H2O = L-methionine (S)-S-oxide + [thioredoxin]-dithiol. Its function is as follows. Has an important function as a repair enzyme for proteins that have been inactivated by oxidation. Catalyzes the reversible oxidation-reduction of methionine sulfoxide in proteins to methionine. This Clavibacter sepedonicus (Clavibacter michiganensis subsp. sepedonicus) protein is Peptide methionine sulfoxide reductase MsrA.